The following is a 1644-amino-acid chain: Peroxisome proliferator-activated receptor gamma coactivator-related protein 1 (1644 aa).

7 disordered regions span residues 1–61, 170–249, 429–616, 646–761, 773–884, 978–1074, and 1322–1507; these read MAAR…DSSF, PERD…EVAG, LTPK…TSPV, AADP…PETP, SAPA…QPPG, STVS…EGVV, and AAPP…NDHY. The segment covering 12–22 has biased composition (pro residues); that stretch reads APPPTGGPGPD. Residues 213-222 show a composition bias toward low complexity; sequence SSPKLPSWRP. Ser-232 is subject to Phosphoserine. The interval 425–460 is necessary for interaction with CREB1 and NRF1 and for transcriptional coactivation; the sequence is IMESLTPKEPQSLPASASQGSQKVPRKGRKKKNKEQ. The span at 437–446 shows a compositional bias: polar residues; sequence LPASASQGSQ. Basic residues predominate over residues 448-457; the sequence is VPRKGRKKKN. Over residues 475 to 496 the composition is skewed to polar residues; the sequence is SSRGQSTVSAEVNSQAGSSQKQ. Over residues 515 to 524 the composition is skewed to low complexity; the sequence is RAWARAWAAA. At Ser-541 the chain carries Phosphoserine. Polar residues predominate over residues 556–572; it reads ETSQANPTLSLNDSAQA. Positions 691–702 are enriched in basic and acidic residues; that stretch reads DHPKVVSPEGKD. A compositionally biased stretch (polar residues) spans 811-821; the sequence is MVSTHSEQVSS. 2 stretches are compositionally biased toward pro residues: residues 828 to 864 and 874 to 884; these read VRPP…PLLP and RLPPPPLQPPG. Phosphoserine is present on residues Ser-1059, Ser-1393, and Ser-1395. Positions 1361-1432 are necessary for interaction with CREB1 and NRF1; it reads EASPCRSEMN…SSSSSVSSSS (72 aa). Low complexity-rich tracts occupy residues 1409 to 1433 and 1453 to 1489; these read SRSV…SSSR and SSCS…VSPC. The RRM domain maps to 1523–1599; the sequence is RVVFIGKIPG…QPFDLCFGGR (77 aa).

In terms of assembly, interacts with CREB1 and NRF1. As to expression, expressed in liver, heart, skeletal muscle, kidney and white and brown adipose tissues.

It is found in the nucleus. Acts as a coactivator during transcriptional activation of nuclear genes related to mitochondrial biogenesis and cell growth. Involved in the transcription coactivation of CREB and NRF1 target genes. The sequence is that of Peroxisome proliferator-activated receptor gamma coactivator-related protein 1 (Pprc1) from Mus musculus (Mouse).